Consider the following 124-residue polypeptide: Small ribosomal subunit protein bS16 (124 aa).

The segment at 82-124 is disordered; it reads LAKRPARSNPTKAVPGKKAQERAAEAKQKAEDAAAAAAESAAE. A compositionally biased stretch (basic and acidic residues) spans 99–113; it reads KAQERAAEAKQKAED. Residues 114 to 124 are compositionally biased toward low complexity; the sequence is AAAAAAESAAE.

It belongs to the bacterial ribosomal protein bS16 family.

The chain is Small ribosomal subunit protein bS16 from Sinorhizobium fredii (strain NBRC 101917 / NGR234).